A 101-amino-acid polypeptide reads, in one-letter code: Urease subunit gamma (101 aa).

It belongs to the urease gamma subunit family. As to quaternary structure, heterotrimer of UreA (gamma), UreB (beta) and UreC (alpha) subunits. Three heterotrimers associate to form the active enzyme.

The protein resides in the cytoplasm. The enzyme catalyses urea + 2 H2O + H(+) = hydrogencarbonate + 2 NH4(+). Its pathway is nitrogen metabolism; urea degradation; CO(2) and NH(3) from urea (urease route): step 1/1. The protein is Urease subunit gamma of Geobacillus kaustophilus (strain HTA426).